The primary structure comprises 537 residues: Actin-histidine N-methyltransferase (537 aa).

Positions 1–12 (MGKNTKRNKKTK) are enriched in basic residues. Residues 1-50 (MGKNTKRNKKTKQQQQQPQQNGVTASASGTAVEDFEDQQAASSLPSLNGK) form a disordered region. Residues Arg114, 143–145 (YQL), Arg299, 325–329 (DMANH), and 375–377 (NGF) contribute to the S-adenosyl-L-methionine site. The 232-residue stretch at 133 to 364 (EGLEIAIFPG…TGEQFFIYYG (232 aa)) folds into the SET domain.

The protein belongs to the class V-like SAM-binding methyltransferase superfamily. SETD3 actin-histidine methyltransferase family.

It is found in the cytoplasm. Its subcellular location is the nucleus. It catalyses the reaction L-histidyl-[protein] + S-adenosyl-L-methionine = N(tele)-methyl-L-histidyl-[protein] + S-adenosyl-L-homocysteine + H(+). In terms of biological role, protein-histidine N-methyltransferase that specifically mediates 3-methylhistidine (tele-methylhistidine) methylation of actin at 'His-74'. The chain is Actin-histidine N-methyltransferase from Drosophila melanogaster (Fruit fly).